Here is a 143-residue protein sequence, read N- to C-terminus: Large ribosomal subunit protein uL13 (143 aa).

The protein belongs to the universal ribosomal protein uL13 family. As to quaternary structure, part of the 50S ribosomal subunit.

In terms of biological role, this protein is one of the early assembly proteins of the 50S ribosomal subunit, although it is not seen to bind rRNA by itself. It is important during the early stages of 50S assembly. This chain is Large ribosomal subunit protein uL13, found in Rubrobacter xylanophilus (strain DSM 9941 / JCM 11954 / NBRC 16129 / PRD-1).